A 757-amino-acid chain; its full sequence is Catalase-peroxidase 2 (757 aa).

Residues 1–26 (MKHPLFNQKVLAGFVSMLLISGSAFA) form the signal peptide. Residues 126 to 248 (WHSAGTYRTL…LGATHMGLIY (123 aa)) constitute a cross-link (tryptophyl-tyrosyl-methioninium (Trp-Tyr) (with M-274)). Catalysis depends on H127, which acts as the Proton acceptor. Residues 248–274 (YVNPEGPKGVPDPLGSAKNIRVAFERM) constitute a cross-link (tryptophyl-tyrosyl-methioninium (Tyr-Met) (with W-126)). Residue H289 coordinates heme b.

Belongs to the peroxidase family. Peroxidase/catalase subfamily. As to quaternary structure, homodimer or homotetramer. It depends on heme b as a cofactor. Post-translationally, formation of the three residue Trp-Tyr-Met cross-link is important for the catalase, but not the peroxidase activity of the enzyme.

It catalyses the reaction H2O2 + AH2 = A + 2 H2O. The enzyme catalyses 2 H2O2 = O2 + 2 H2O. Functionally, bifunctional enzyme with both catalase and broad-spectrum peroxidase activity. This is Catalase-peroxidase 2 from Shewanella frigidimarina (strain NCIMB 400).